Reading from the N-terminus, the 92-residue chain is Small ribosomal subunit protein uS19 (92 aa).

A disordered region spans residues 73–92 (EFSPTRSFRGHAGAKNKGKK). Over residues 80-92 (FRGHAGAKNKGKK) the composition is skewed to basic residues.

The protein belongs to the universal ribosomal protein uS19 family.

Protein S19 forms a complex with S13 that binds strongly to the 16S ribosomal RNA. This Flavobacterium psychrophilum (strain ATCC 49511 / DSM 21280 / CIP 103535 / JIP02/86) protein is Small ribosomal subunit protein uS19.